Consider the following 434-residue polypeptide: L-2-hydroxyglutarate dehydrogenase, mitochondrial (434 aa).

Belongs to the L2HGDH family. FAD serves as cofactor.

The protein resides in the mitochondrion. The enzyme catalyses (S)-2-hydroxyglutarate + A = 2-oxoglutarate + AH2. The sequence is that of L-2-hydroxyglutarate dehydrogenase, mitochondrial from Caenorhabditis briggsae.